The chain runs to 297 residues: MFNSNVKLGIAPIAWTNDDMPDLGKENTFEQCISEMALAGFKGSEVGNKYPRDVKVLKKALELRDMEIASAWFSAFLTTKPYEETEKAFIEHRDFLNAMGAKVIVVSEQGHSIQGQMETPIFDGKYVLNEEEWKTLAEGLNKLGALAKEKGMKLVYHHHMGTVVQTTEEIDKLMDLTDENLVYLLFDSGHLVYSGEDALEVLKKYVNRVKHVHLKDIRKEKVEEVKRDKLSFLQGVRKGAFTVPGDGDIDFEPIFKVLDDNNYEGYLLVEAEQDPAIANPLEYAIKARKYIKEKTNL.

Belongs to the IolE/MocC family. Requires glutathione as cofactor. The cofactor is Co(2+). Mn(2+) serves as cofactor.

It carries out the reaction scyllo-inosose = 3D-3,5/4-trihydroxycyclohexane-1,2-dione + H2O. The protein operates within polyol metabolism; myo-inositol degradation into acetyl-CoA; acetyl-CoA from myo-inositol: step 2/7. Catalyzes the dehydration of inosose (2-keto-myo-inositol, 2KMI or 2,4,6/3,5-pentahydroxycyclohexanone) to 3D-(3,5/4)-trihydroxycyclohexane-1,2-dione (D-2,3-diketo-4-deoxy-epi-inositol). This chain is Inosose dehydratase, found in Clostridium perfringens (strain ATCC 13124 / DSM 756 / JCM 1290 / NCIMB 6125 / NCTC 8237 / Type A).